A 545-amino-acid chain; its full sequence is Chaperonin GroEL 2 (545 aa).

Residues 29-32 (TLGP), 86-90 (DGTTT), Gly413, 479-481 (NAA), and Asp495 each bind ATP.

It belongs to the chaperonin (HSP60) family. Forms a cylinder of 14 subunits composed of two heptameric rings stacked back-to-back. Interacts with the co-chaperonin GroES.

Its subcellular location is the cytoplasm. The catalysed reaction is ATP + H2O + a folded polypeptide = ADP + phosphate + an unfolded polypeptide.. Its function is as follows. Together with its co-chaperonin GroES, plays an essential role in assisting protein folding. The GroEL-GroES system forms a nano-cage that allows encapsulation of the non-native substrate proteins and provides a physical environment optimized to promote and accelerate protein folding. This is Chaperonin GroEL 2 from Prochlorococcus marinus (strain MIT 9215).